Here is a 273-residue protein sequence, read N- to C-terminus: MSQRTVFFISDGTGITAETFGNAILAQFETNFRHVRLPFTDSVDKAHQAVREINHAGIVDGNKSIVFTTLVDMEVLKVITDNCHGMVLDMFSTFVHPLESELNLKSSHRIGRFTDASKSSAYQSRIEAINFSLAHDDGQSNTDLEHSDIILVGVSRSGKTPTSLYLAMQYGLKASNYPLIPDDFERQQLPPALKAHKSKLFGLTIQPERLSEIRNERRPNSKYASLENCRMEVSEAEAMMRRSGIRWLSTTTKSIEEISTTILQEIRPERLAY.

Glycine 153–threonine 160 contacts ADP.

This sequence belongs to the pyruvate, phosphate/water dikinase regulatory protein family. PSRP subfamily.

It carries out the reaction [pyruvate, water dikinase] + ADP = [pyruvate, water dikinase]-phosphate + AMP + H(+). The catalysed reaction is [pyruvate, water dikinase]-phosphate + phosphate + H(+) = [pyruvate, water dikinase] + diphosphate. In terms of biological role, bifunctional serine/threonine kinase and phosphorylase involved in the regulation of the phosphoenolpyruvate synthase (PEPS) by catalyzing its phosphorylation/dephosphorylation. The sequence is that of Putative phosphoenolpyruvate synthase regulatory protein from Albidiferax ferrireducens (strain ATCC BAA-621 / DSM 15236 / T118) (Rhodoferax ferrireducens).